A 193-amino-acid polypeptide reads, in one-letter code: Potassium-transporting ATPase KdpC subunit (193 aa).

The chain crosses the membrane as a helical span at residues 9 to 29 (VLMTVVTTVLLGLVYPLLITG).

Belongs to the KdpC family. In terms of assembly, the system is composed of three essential subunits: KdpA, KdpB and KdpC.

Its subcellular location is the cell inner membrane. Part of the high-affinity ATP-driven potassium transport (or Kdp) system, which catalyzes the hydrolysis of ATP coupled with the electrogenic transport of potassium into the cytoplasm. This subunit acts as a catalytic chaperone that increases the ATP-binding affinity of the ATP-hydrolyzing subunit KdpB by the formation of a transient KdpB/KdpC/ATP ternary complex. This chain is Potassium-transporting ATPase KdpC subunit, found in Koribacter versatilis (strain Ellin345).